We begin with the raw amino-acid sequence, 366 residues long: UDP-N-acetylglucosamine--N-acetylmuramyl-(pentapeptide) pyrophosphoryl-undecaprenol N-acetylglucosamine transferase (366 aa).

Residues 14-16, Asn125, Arg168, Ser196, and Gln297 each bind UDP-N-acetyl-alpha-D-glucosamine; that span reads TGG.

Belongs to the glycosyltransferase 28 family. MurG subfamily.

The protein resides in the cell inner membrane. It catalyses the reaction di-trans,octa-cis-undecaprenyl diphospho-N-acetyl-alpha-D-muramoyl-L-alanyl-D-glutamyl-meso-2,6-diaminopimeloyl-D-alanyl-D-alanine + UDP-N-acetyl-alpha-D-glucosamine = di-trans,octa-cis-undecaprenyl diphospho-[N-acetyl-alpha-D-glucosaminyl-(1-&gt;4)]-N-acetyl-alpha-D-muramoyl-L-alanyl-D-glutamyl-meso-2,6-diaminopimeloyl-D-alanyl-D-alanine + UDP + H(+). It participates in cell wall biogenesis; peptidoglycan biosynthesis. Functionally, cell wall formation. Catalyzes the transfer of a GlcNAc subunit on undecaprenyl-pyrophosphoryl-MurNAc-pentapeptide (lipid intermediate I) to form undecaprenyl-pyrophosphoryl-MurNAc-(pentapeptide)GlcNAc (lipid intermediate II). The chain is UDP-N-acetylglucosamine--N-acetylmuramyl-(pentapeptide) pyrophosphoryl-undecaprenol N-acetylglucosamine transferase from Rhodopseudomonas palustris (strain BisB5).